Reading from the N-terminus, the 788-residue chain is Calpastatin (788 aa).

A compositionally biased stretch (pro residues) spans 1–11 (MSQPGPKPAAS). Disordered stretches follow at residues 1 to 262 (MSQP…TGPV), 289 to 493 (LLEK…MCSI), and 514 to 580 (TLAG…SQEQ). Position 11 is a phosphoserine (serine 11). A compositionally biased stretch (low complexity) spans 12–21 (PRPSRGAAAR). Positions 38–49 (PGEKKGSDEKKA) are enriched in basic and acidic residues. A compositionally biased stretch (low complexity) spans 65-87 (AATATKVTASSAATSKSPSMSTT). Residues 99-119 (EGPDQKRPREQAVKTESKKPQ) are compositionally biased toward basic and acidic residues. Residue lysine 112 forms a Glycyl lysine isopeptide (Lys-Gly) (interchain with G-Cter in SUMO2) linkage. The residue at position 129 (lysine 129) is an N6-acetyllysine. Serine 165 is modified (phosphoserine). Phosphothreonine is present on threonine 216. The residue at position 219 (serine 219) is a Phosphoserine. Residues 246–256 (GGHEDTNRDDP) are compositionally biased toward basic and acidic residues. An Inhibitory domain 1 repeat occupies 251 to 303 (TNRDDPPYTGPVVLDPMYSTYLEALGIKEGTIPPEYRKLLEKNEGITQPLPDS). Serine 303 and serine 324 each carry phosphoserine. 2 stretches are compositionally biased toward polar residues: residues 318–328 (SDFTCSSPTGK) and 369–380 (QALQALSDSLGT). The stretch at 384-436 (DPPSHVSQAEQVKEAKAKEERQEKCGEDEDTVPAEYRLKPAKDKDGKPLLPEP) is one Inhibitory domain 2 repeat. Composition is skewed to basic and acidic residues over residues 394–408 (QVKE…QEKC) and 419–430 (YRLKPAKDKDGK). Residues 441-453 (KSLSESELIGELS) show a composition bias toward low complexity. Phosphoserine is present on residues serine 444, serine 446, and serine 453. The residue at position 479 (threonine 479) is a Phosphothreonine. Serine 518 carries the post-translational modification Phosphoserine. The segment covering 522–570 (READPEHEKTVEDKVKEKAKEEEHEKLGEKEETVPPDYRLEEVKDKDGK) has biased composition (basic and acidic residues). The Inhibitory domain 3 repeat unit spans residues 524–577 (ADPEHEKTVEDKVKEKAKEEEHEKLGEKEETVPPDYRLEEVKDKDGKPLLPKES). Residues serine 594, serine 605, serine 653, and serine 655 each carry the phosphoserine modification. A disordered region spans residues 620-788 (VVSQTPAPST…PKAKEDARHS (169 aa)). The stretch at 661 to 714 (PDPDENKPLDDKVKEKIKPEHSEKLGERDDTIPPEYRHLLDNDGKDKPEKPPTK) is one Inhibitory domain 4 repeat. Basic and acidic residues-rich tracts occupy residues 661 to 726 (PDPD…RDPI) and 759 to 788 (ASKD…ARHS).

It belongs to the protease inhibitor I27 (calpastatin) family. In terms of tissue distribution, isoform 2 is the major form in all tissues examined. Isoform 1 accounts for 5-10% in tissues such as skeletal muscle, liver and brain, and 30% in myoblasts. Isoforms 4 and 5 are testis-specific. Isoform 6 is highly expressed in heart and skeletal muscle with lower levels in liver, brain and testis. Isoform 7 is expressed at high levels in liver.

Specific inhibition of calpain (calcium-dependent cysteine protease). Plays a key role in postmortem tenderization of meat and have been proposed to be involved in muscle protein degradation in living tissue. The sequence is that of Calpastatin (Cast) from Mus musculus (Mouse).